The following is a 385-amino-acid chain: Transcription termination factor 2, mitochondrial (385 aa).

Residues 1 to 35 (MLWKLLLRSQSCRLCSFRKMRSPPKYRPFLACFTY) constitute a mitochondrion transit peptide.

Belongs to the mTERF family. Monomer. In terms of tissue distribution, expressed in skeletal muscle, heart, liver and pancreas.

It localises to the mitochondrion. Its subcellular location is the mitochondrion matrix. The protein resides in the mitochondrion nucleoid. Its function is as follows. Binds mitochondrial DNA and plays a role in the regulation of transcription of mitochondrial mRNA and rRNA species. This chain is Transcription termination factor 2, mitochondrial (MTERF2), found in Homo sapiens (Human).